A 469-amino-acid polypeptide reads, in one-letter code: Sulfate adenylyltransferase subunit 1 (469 aa).

The region spanning 22–237 (KEVLRFITCG…LEEVPVKSEE (216 aa)) is the tr-type G domain. The G1 stretch occupies residues 31 to 38 (GSVDDGKS). 31 to 38 (GSVDDGKS) contacts GTP. Positions 89 to 93 (GITID) are G2. Positions 110–113 (DTPG) are G3. Residues 110–114 (DTPGH) and 165–168 (NKMD) each bind GTP. The tract at residues 165–168 (NKMD) is G4. A G5 region spans residues 202 to 204 (SAK).

Belongs to the TRAFAC class translation factor GTPase superfamily. Classic translation factor GTPase family. CysN/NodQ subfamily. As to quaternary structure, heterodimer composed of CysD, the smaller subunit, and CysN.

The enzyme catalyses sulfate + ATP + H(+) = adenosine 5'-phosphosulfate + diphosphate. Its pathway is sulfur metabolism; hydrogen sulfide biosynthesis; sulfite from sulfate: step 1/3. Functionally, with CysD forms the ATP sulfurylase (ATPS) that catalyzes the adenylation of sulfate producing adenosine 5'-phosphosulfate (APS) and diphosphate, the first enzymatic step in sulfur assimilation pathway. APS synthesis involves the formation of a high-energy phosphoric-sulfuric acid anhydride bond driven by GTP hydrolysis by CysN coupled to ATP hydrolysis by CysD. This is Sulfate adenylyltransferase subunit 1 from Methylorubrum extorquens (strain CM4 / NCIMB 13688) (Methylobacterium extorquens).